We begin with the raw amino-acid sequence, 97 residues long: MNLAIQDVVKRPLITEKAERNREANRQFAFEVHRDATKIQVKQAVEKLFNVHVLDVRTAIARGKNKRVGRNVGRRPNWKKAFVTLKEGETIALFEGT.

Belongs to the universal ribosomal protein uL23 family. Part of the 50S ribosomal subunit. Contacts protein L29, and trigger factor when it is bound to the ribosome.

Functionally, one of the early assembly proteins it binds 23S rRNA. One of the proteins that surrounds the polypeptide exit tunnel on the outside of the ribosome. Forms the main docking site for trigger factor binding to the ribosome. In Anaeromyxobacter sp. (strain Fw109-5), this protein is Large ribosomal subunit protein uL23.